The sequence spans 66 residues: Large ribosomal subunit protein bL33c (66 aa).

It belongs to the bacterial ribosomal protein bL33 family.

It localises to the plastid. Its subcellular location is the chloroplast. This Dioscorea elephantipes (Elephant's foot yam) protein is Large ribosomal subunit protein bL33c.